Reading from the N-terminus, the 416-residue chain is Tyrosine--tRNA ligase (416 aa).

Position 37 (Y37) interacts with L-tyrosine. The 'HIGH' region motif lies at 42–51 (PTADSLHVGN). L-tyrosine contacts are provided by Y176 and Q180. A 'KMSKS' region motif is present at residues 236–240 (KMGKS). Residue K239 coordinates ATP. Residues 350–416 (LPAFRVFQEA…KKKHILLRPV (67 aa)) enclose the S4 RNA-binding domain.

It belongs to the class-I aminoacyl-tRNA synthetase family. TyrS type 1 subfamily. In terms of assembly, homodimer.

The protein localises to the cytoplasm. The catalysed reaction is tRNA(Tyr) + L-tyrosine + ATP = L-tyrosyl-tRNA(Tyr) + AMP + diphosphate + H(+). Its function is as follows. Catalyzes the attachment of tyrosine to tRNA(Tyr) in a two-step reaction: tyrosine is first activated by ATP to form Tyr-AMP and then transferred to the acceptor end of tRNA(Tyr). The chain is Tyrosine--tRNA ligase from Gluconobacter oxydans (strain 621H) (Gluconobacter suboxydans).